Reading from the N-terminus, the 200-residue chain is Small ribosomal subunit protein uS4 (200 aa).

Residues 22-42 (TGKELEKRPYAPGPHGPNQRK) are disordered. The S4 RNA-binding domain maps to 92 to 152 (ARLDNLVYRM…EKSNNLVVVK (61 aa)).

It belongs to the universal ribosomal protein uS4 family. In terms of assembly, part of the 30S ribosomal subunit. Contacts protein S5. The interaction surface between S4 and S5 is involved in control of translational fidelity.

One of the primary rRNA binding proteins, it binds directly to 16S rRNA where it nucleates assembly of the body of the 30S subunit. In terms of biological role, with S5 and S12 plays an important role in translational accuracy. This chain is Small ribosomal subunit protein uS4, found in Bacillus thuringiensis subsp. konkukian (strain 97-27).